The chain runs to 449 residues: Glucose-6-phosphate isomerase (449 aa).

Glu-291 serves as the catalytic Proton donor. Active-site residues include His-312 and Lys-426.

The protein belongs to the GPI family.

Its subcellular location is the cytoplasm. It catalyses the reaction alpha-D-glucose 6-phosphate = beta-D-fructose 6-phosphate. The protein operates within carbohydrate biosynthesis; gluconeogenesis. Its pathway is carbohydrate degradation; glycolysis; D-glyceraldehyde 3-phosphate and glycerone phosphate from D-glucose: step 2/4. Its function is as follows. Catalyzes the reversible isomerization of glucose-6-phosphate to fructose-6-phosphate. The polypeptide is Glucose-6-phosphate isomerase (Streptococcus thermophilus (strain CNRZ 1066)).